Consider the following 85-residue polypeptide: Large ribosomal subunit protein bL27 (85 aa).

Residues 1–23 are disordered; the sequence is MAHKKGQGSTQNNRDSAGRRLGV.

Belongs to the bacterial ribosomal protein bL27 family.

In Aliarcobacter butzleri (strain RM4018) (Arcobacter butzleri), this protein is Large ribosomal subunit protein bL27.